Here is a 481-residue protein sequence, read N- to C-terminus: UDP-N-acetylmuramoyl-L-alanyl-D-glutamate--L-lysine ligase (481 aa).

S42 serves as a coordination point for UDP-N-acetyl-alpha-D-muramoyl-L-alanyl-D-glutamate. 118 to 124 (GTKGKTT) provides a ligand contact to ATP. Residues Q158, 160 to 161 (TT), S187, and R195 each bind UDP-N-acetyl-alpha-D-muramoyl-L-alanyl-D-glutamate. K229 is subject to N6-carboxylysine. Positions 404–407 (DDPN) match the L-lysine recognition motif motif.

The protein belongs to the MurCDEF family. MurE subfamily. Post-translationally, carboxylation is probably crucial for Mg(2+) binding and, consequently, for the gamma-phosphate positioning of ATP.

It localises to the cytoplasm. The enzyme catalyses UDP-N-acetyl-alpha-D-muramoyl-L-alanyl-D-glutamate + L-lysine + ATP = UDP-N-acetyl-alpha-D-muramoyl-L-alanyl-gamma-D-glutamyl-L-lysine + ADP + phosphate + H(+). Its pathway is cell wall biogenesis; peptidoglycan biosynthesis. Catalyzes the addition of L-lysine to the nucleotide precursor UDP-N-acetylmuramoyl-L-alanyl-D-glutamate (UMAG) in the biosynthesis of bacterial cell-wall peptidoglycan. The sequence is that of UDP-N-acetylmuramoyl-L-alanyl-D-glutamate--L-lysine ligase from Streptococcus pyogenes serotype M4 (strain MGAS10750).